A 450-amino-acid chain; its full sequence is UDP-N-acetylmuramoylalanine--D-glutamate ligase (450 aa).

ATP is bound at residue 119–125 (GSNGKTT).

Belongs to the MurCDEF family.

The protein localises to the cytoplasm. It carries out the reaction UDP-N-acetyl-alpha-D-muramoyl-L-alanine + D-glutamate + ATP = UDP-N-acetyl-alpha-D-muramoyl-L-alanyl-D-glutamate + ADP + phosphate + H(+). It functions in the pathway cell wall biogenesis; peptidoglycan biosynthesis. In terms of biological role, cell wall formation. Catalyzes the addition of glutamate to the nucleotide precursor UDP-N-acetylmuramoyl-L-alanine (UMA). In Streptococcus pneumoniae (strain ATCC 700669 / Spain 23F-1), this protein is UDP-N-acetylmuramoylalanine--D-glutamate ligase.